The sequence spans 364 residues: Carbamoyl phosphate synthase pyrimidine-specific small chain (364 aa).

The interval 1–169 (MKRYLVLEDG…AYPNPATGPN (169 aa)) is CPSase. L-glutamine is bound by residues serine 45, glycine 217, and glycine 219. Residues 169 to 356 (NVVVVDFGLK…IDLMAANQAT (188 aa)) enclose the Glutamine amidotransferase type-1 domain. Residue cysteine 244 is the Nucleophile of the active site. The L-glutamine site is built by leucine 245, glutamine 248, asparagine 286, glycine 288, and tyrosine 289. Catalysis depends on residues histidine 329 and aspartate 331.

The protein belongs to the CarA family. As to quaternary structure, composed of two chains; the small (or glutamine) chain promotes the hydrolysis of glutamine to ammonia, which is used by the large (or ammonia) chain to synthesize carbamoyl phosphate. Tetramer of heterodimers (alpha,beta)4.

It carries out the reaction hydrogencarbonate + L-glutamine + 2 ATP + H2O = carbamoyl phosphate + L-glutamate + 2 ADP + phosphate + 2 H(+). The catalysed reaction is L-glutamine + H2O = L-glutamate + NH4(+). Its pathway is pyrimidine metabolism; UMP biosynthesis via de novo pathway; (S)-dihydroorotate from bicarbonate: step 1/3. Inhibited by pyrimidine. In terms of biological role, small subunit of the glutamine-dependent carbamoyl phosphate synthetase (CPSase). CPSase catalyzes the formation of carbamoyl phosphate from the ammonia moiety of glutamine, carbonate, and phosphate donated by ATP, constituting the first step of the biosynthetic pathway leading to pyrimidine nucleotides. The small subunit (glutamine amidotransferase) binds and cleaves glutamine to supply the large subunit with the substrate ammonia. This is Carbamoyl phosphate synthase pyrimidine-specific small chain from Lactiplantibacillus plantarum (strain ATCC BAA-793 / NCIMB 8826 / WCFS1) (Lactobacillus plantarum).